The sequence spans 192 residues: Signal peptidase complex catalytic subunit SEC11C (192 aa).

Topologically, residues Met-1–Arg-28 are cytoplasmic. A helical; Signal-anchor for type II membrane protein transmembrane segment spans residues Gln-29 to Trp-48. Over Lys-49–Ser-192 the chain is Lumenal. Active-site charge relay system residues include Ser-68, His-108, and Asp-134. Residues Ala-177 to Leu-188 form a C-terminal short (CTS) helix region.

It belongs to the peptidase S26B family. As to quaternary structure, component of the signal peptidase complex paralog C (SPC-C) composed of a catalytic subunit SEC11C and three accessory subunits SPCS1, SPCS2 and SPCS3. Within the complex, interacts with SPCS2 and SPCS3. The complex induces a local thinning of the ER membrane which is used to measure the length of the signal peptide (SP) h-region of protein substrates. This ensures the selectivity of the complex towards h-regions shorter than 18-20 amino acids. In terms of processing, may undergo processing at the N-terminus.

It is found in the endoplasmic reticulum membrane. It catalyses the reaction Cleavage of hydrophobic, N-terminal signal or leader sequences from secreted and periplasmic proteins.. Functionally, catalytic component of the signal peptidase complex (SPC) which catalyzes the cleavage of N-terminal signal sequences from nascent proteins as they are translocated into the lumen of the endoplasmic reticulum. Specifically cleaves N-terminal signal peptides that contain a hydrophobic alpha-helix (h-region) shorter than 18-20 amino acids. The polypeptide is Signal peptidase complex catalytic subunit SEC11C (Sec11c) (Mus musculus (Mouse)).